Reading from the N-terminus, the 234-residue chain is Mannose/glucose-specific lectin Cramoll (234 aa).

Mn(2+) contacts are provided by glutamate 8 and aspartate 10. Positions 10, 12, 14, and 19 each coordinate Ca(2+). An a carbohydrate-binding site is contributed by tyrosine 12. Residues aspartate 19, histidine 24, and serine 34 each contribute to the Mn(2+) site. 99–100 provides a ligand contact to a carbohydrate; it reads LY. Ca(2+) is bound at residue aspartate 205. Position 225 (arginine 225) interacts with a carbohydrate.

This sequence belongs to the leguminous lectin family. As to quaternary structure, homotetramer. In terms of processing, the alpha and beta chains are produced by partial proteolytic processing of the lectin precursor by an asparaginyl endopeptidase.

In terms of biological role, glucose/D-mannose specific lectin. This is Mannose/glucose-specific lectin Cramoll from Cratylia mollis (Camaratu bean).